Consider the following 191-residue polypeptide: Small ribosomal subunit protein bS6 (191 aa).

A disordered region spans residues Lys-168–Ala-191. Residues Ser-181–Ala-191 are compositionally biased toward basic and acidic residues.

Belongs to the bacterial ribosomal protein bS6 family.

Binds together with bS18 to 16S ribosomal RNA. The polypeptide is Small ribosomal subunit protein bS6 (Mycoplasmoides gallisepticum (strain R(low / passage 15 / clone 2)) (Mycoplasma gallisepticum)).